Here is a 318-residue protein sequence, read N- to C-terminus: Ribonuclease Z (318 aa).

Residues His-62, His-64, Asp-66, His-67, His-139, Asp-210, and His-268 each coordinate Zn(2+). Asp-66 acts as the Proton acceptor in catalysis.

Belongs to the RNase Z family. In terms of assembly, homodimer. The cofactor is Zn(2+).

The catalysed reaction is Endonucleolytic cleavage of RNA, removing extra 3' nucleotides from tRNA precursor, generating 3' termini of tRNAs. A 3'-hydroxy group is left at the tRNA terminus and a 5'-phosphoryl group is left at the trailer molecule.. Zinc phosphodiesterase, which displays some tRNA 3'-processing endonuclease activity. Probably involved in tRNA maturation, by removing a 3'-trailer from precursor tRNA. The chain is Ribonuclease Z from Microcystis aeruginosa (strain NIES-843 / IAM M-2473).